Here is a 639-residue protein sequence, read N- to C-terminus: Mediator of RNA polymerase II transcription subunit 17 (639 aa).

Residues 32–43 show a composition bias toward polar residues; the sequence is ASATVTTNGTTA. Disordered stretches follow at residues 32–68 and 130–159; these read ASAT…EEHS and MGDA…NNDS. A compositionally biased stretch (low complexity) spans 48-57; it reads DSGSQQSVSS. Residues 58–68 are compositionally biased toward polar residues; sequence APIQQNSEEHS. Residues 245 to 271 are a coiled coil; it reads WKLRSLEDSKALLKENYAKLQKSLEVE.

Belongs to the Mediator complex subunit 17 family. In terms of assembly, component of the Mediator complex.

It localises to the nucleus. Component of the Mediator complex, a coactivator involved in the regulated transcription of nearly all RNA polymerase II-dependent genes. Mediator functions as a bridge to convey information from gene-specific regulatory proteins to the basal RNA polymerase II transcription machinery. Mediator is recruited to promoters by direct interactions with regulatory proteins and serves as a scaffold for the assembly of a functional preinitiation complex with RNA polymerase II and the general transcription factors. The polypeptide is Mediator of RNA polymerase II transcription subunit 17 (SRB4) (Eremothecium gossypii (strain ATCC 10895 / CBS 109.51 / FGSC 9923 / NRRL Y-1056) (Yeast)).